A 60-amino-acid chain; its full sequence is Beta-defensin 8 (60 aa).

Residues 1–22 form the signal peptide; it reads MRIHYLLFTFLLVLLSPLAAFS. The propeptide occupies 23-25; that stretch reads QKI. 3 cysteine pairs are disulfide-bonded: cysteine 31-cysteine 58, cysteine 38-cysteine 52, and cysteine 42-cysteine 59.

Belongs to the beta-defensin family. In terms of tissue distribution, most highly expressed in testis and heart.

It localises to the secreted. In terms of biological role, a synthetic peptide displays antimicrobial activities against S.aureus, P.aeruginosa, E.coli and B.cepacia. The antimicrobial activity against S.aureus, E.coli and B.cepacia is reduced in raised concentration of NaCl, but its action against P.aeruginosa is independent of NaCl concentration. This is Beta-defensin 8 (Defb8) from Mus musculus (Mouse).